Consider the following 427-residue polypeptide: Forkhead box protein A1-B (427 aa).

The fork-head DNA-binding region spans 157 to 251 (KPPYSYISLI…ENGCYLRRQK (95 aa)). Basic and acidic residues predominate over residues 256 to 272 (EKTQGGKGNQDGRKDHS). The disordered stretch occupies residues 256–336 (EKTQGGKGNQ…HQNHSTHSLA (81 aa)). The span at 285-302 (SSQMDSSSSMSNPSSSPQ) shows a compositional bias: low complexity. A compositionally biased stretch (polar residues) spans 323 to 334 (PLSSHQNHSTHS).

As to expression, present in the vegetal pole and marginal zone but not the animal pole of gastrulae and in equal levels in the dorsal and ventral halves of both gastrulae and neurulae. At neurula stage, expressed in the notochord. During tailbud stages, expressed in the foregut, brain, hypocord, neural floor plate and in two lines of cells just dorsal and ventral to the notochord. Expressed in the adult liver.

Its subcellular location is the nucleus. Its function is as follows. Probable transcription factor. The protein is Forkhead box protein A1-B (foxa1-b) of Xenopus laevis (African clawed frog).